The chain runs to 502 residues: Cytochrome P450 2J2 (502 aa).

Cysteine 448 contacts heme.

This sequence belongs to the cytochrome P450 family. Heme serves as cofactor. Highly expressed in heart, present at lower levels in liver, kidney and skeletal muscle (at protein level).

It is found in the endoplasmic reticulum membrane. The protein localises to the microsome membrane. The catalysed reaction is (5Z,8Z,11Z,14Z)-eicosatetraenoate + reduced [NADPH--hemoprotein reductase] + O2 = 5,6-epoxy-(8Z,11Z,14Z)-eicosatrienoate + oxidized [NADPH--hemoprotein reductase] + H2O + H(+). It carries out the reaction (5Z,8Z,11Z,14Z)-eicosatetraenoate + reduced [NADPH--hemoprotein reductase] + O2 = (8R,9S)-epoxy-(5Z,11Z,14Z)-eicosatrienoate + oxidized [NADPH--hemoprotein reductase] + H2O + H(+). The enzyme catalyses (5Z,8Z,11Z,14Z)-eicosatetraenoate + reduced [NADPH--hemoprotein reductase] + O2 = (8S,9R)-epoxy-(5Z,11Z,14Z)-eicosatrienoate + oxidized [NADPH--hemoprotein reductase] + H2O + H(+). It catalyses the reaction (5Z,8Z,11Z,14Z)-eicosatetraenoate + reduced [NADPH--hemoprotein reductase] + O2 = (11R,12S)-epoxy-(5Z,8Z,14Z)-eicosatrienoate + oxidized [NADPH--hemoprotein reductase] + H2O + H(+). The catalysed reaction is (5Z,8Z,11Z,14Z)-eicosatetraenoate + reduced [NADPH--hemoprotein reductase] + O2 = (11S,12R)-epoxy-(5Z,8Z,14Z)-eicosatrienoate + oxidized [NADPH--hemoprotein reductase] + H2O + H(+). It carries out the reaction (5Z,8Z,11Z,14Z)-eicosatetraenoate + reduced [NADPH--hemoprotein reductase] + O2 = (14R,15S)-epoxy-(5Z,8Z,11Z)-eicosatrienoate + oxidized [NADPH--hemoprotein reductase] + H2O + H(+). The enzyme catalyses (5Z,8Z,11Z,14Z)-eicosatetraenoate + reduced [NADPH--hemoprotein reductase] + O2 = (14S,15R)-epoxy-(5Z,8Z,11Z)-eicosatrienoate + oxidized [NADPH--hemoprotein reductase] + H2O + H(+). It catalyses the reaction (15S)-hydroperoxy-(5Z,8Z,11Z,13E)-eicosatetraenoate = (13S)-hydroxy-(14S,15S)-epoxy-(5Z,8Z,11Z)-eicosatrienoate. The catalysed reaction is (15S)-hydroperoxy-(5Z,8Z,11Z,13E)-eicosatetraenoate = (13R)-hydroxy-(14S,15S)-epoxy-(5Z,8Z,11Z)-eicosatrienoate. It carries out the reaction (5Z,8Z,11Z,14Z,17Z)-eicosapentaenoate + reduced [NADPH--hemoprotein reductase] + O2 = (17R,18S)-epoxy-(5Z,8Z,11Z,14Z)-eicosatetraenoate + oxidized [NADPH--hemoprotein reductase] + H2O + H(+). The enzyme catalyses (5Z,8Z,11Z,14Z,17Z)-eicosapentaenoate + reduced [NADPH--hemoprotein reductase] + O2 = (17S,18R)-epoxy-(5Z,8Z,11Z,14Z)-eicosatetraenoate + oxidized [NADPH--hemoprotein reductase] + H2O + H(+). It catalyses the reaction (4Z,7Z,10Z,13Z,16Z,19Z)-docosahexaenoate + reduced [NADPH--hemoprotein reductase] + O2 = (19R,20S)-epoxy-(4Z,7Z,10Z,13Z,16Z)-docosapentaenoate + oxidized [NADPH--hemoprotein reductase] + H2O + H(+). The catalysed reaction is (4Z,7Z,10Z,13Z,16Z,19Z)-docosahexaenoate + reduced [NADPH--hemoprotein reductase] + O2 = (19S,20R)-epoxy-(4Z,7Z,10Z,13Z,16Z)-docosapentaenoate + oxidized [NADPH--hemoprotein reductase] + H2O + H(+). It carries out the reaction albendazole + reduced [NADPH--hemoprotein reductase] + O2 = hydroxyalbendazole + oxidized [NADPH--hemoprotein reductase] + H2O + H(+). The enzyme catalyses albendazole + reduced [NADPH--hemoprotein reductase] + O2 = albendazole S-oxide + oxidized [NADPH--hemoprotein reductase] + H2O + H(+). It catalyses the reaction fenbendazole + reduced [NADPH--hemoprotein reductase] + O2 = fenbendazole S-oxide + oxidized [NADPH--hemoprotein reductase] + H2O + H(+). The protein operates within lipid metabolism; arachidonate metabolism. Its function is as follows. A cytochrome P450 monooxygenase involved in the metabolism of polyunsaturated fatty acids (PUFA) in the cardiovascular system. Mechanistically, uses molecular oxygen inserting one oxygen atom into a substrate, and reducing the second into a water molecule, with two electrons provided by NADPH via cytochrome P450 reductase (NADPH--hemoprotein reductase). Catalyzes the epoxidation of double bonds of PUFA. Converts arachidonic acid to four regioisomeric epoxyeicosatrienoic acids (EpETrE), likely playing a major role in the epoxidation of endogenous cardiac arachidonic acid pools. In endothelial cells, participates in eicosanoids metabolism by converting hydroperoxide species into hydroxy epoxy metabolites. In combination with 15-lipoxygenase metabolizes arachidonic acid and converts hydroperoxyicosatetraenoates (HpETEs) into hydroxy epoxy eicosatrienoates (HEETs), which are precursors of vasodilatory trihydroxyicosatrienoic acids (THETAs). This hydroperoxide isomerase activity is NADPH- and O2-independent. Catalyzes the monooxygenation of a various xenobiotics, such as danazol, amiodarone, terfenadine, astemizole, thioridazine, tamoxifen, cyclosporin A and nabumetone. Catalyzes hydroxylation of the anthelmintics albendazole and fenbendazole. Catalyzes the sulfoxidation of fenbedazole. This is Cytochrome P450 2J2 from Homo sapiens (Human).